The chain runs to 355 residues: 3-dehydroquinate synthase (355 aa).

Residues 71-76 (EGEERK), 105-109 (GVVGD), 129-130 (TS), lysine 142, and lysine 151 each bind NAD(+). The Zn(2+) site is built by glutamate 184, histidine 246, and histidine 263.

Belongs to the sugar phosphate cyclases superfamily. Dehydroquinate synthase family. The cofactor is NAD(+). It depends on Co(2+) as a cofactor. Zn(2+) is required as a cofactor.

The protein resides in the cytoplasm. It catalyses the reaction 7-phospho-2-dehydro-3-deoxy-D-arabino-heptonate = 3-dehydroquinate + phosphate. The protein operates within metabolic intermediate biosynthesis; chorismate biosynthesis; chorismate from D-erythrose 4-phosphate and phosphoenolpyruvate: step 2/7. In terms of biological role, catalyzes the conversion of 3-deoxy-D-arabino-heptulosonate 7-phosphate (DAHP) to dehydroquinate (DHQ). The polypeptide is 3-dehydroquinate synthase (Streptococcus pneumoniae (strain ATCC BAA-255 / R6)).